The following is a 251-amino-acid chain: Probable transcriptional regulatory protein cgR_1708 (251 aa).

The segment at 1–22 is disordered; sequence MAGHSKWATTKHKKAANDAKRG.

This sequence belongs to the TACO1 family.

It localises to the cytoplasm. The polypeptide is Probable transcriptional regulatory protein cgR_1708 (Corynebacterium glutamicum (strain R)).